A 210-amino-acid polypeptide reads, in one-letter code: Protein-L-isoaspartate O-methyltransferase (210 aa).

S59 is an active-site residue.

This sequence belongs to the methyltransferase superfamily. L-isoaspartyl/D-aspartyl protein methyltransferase family.

It localises to the cytoplasm. The enzyme catalyses [protein]-L-isoaspartate + S-adenosyl-L-methionine = [protein]-L-isoaspartate alpha-methyl ester + S-adenosyl-L-homocysteine. Its function is as follows. Catalyzes the methyl esterification of L-isoaspartyl residues in peptides and proteins that result from spontaneous decomposition of normal L-aspartyl and L-asparaginyl residues. It plays a role in the repair and/or degradation of damaged proteins. This chain is Protein-L-isoaspartate O-methyltransferase, found in Nitratidesulfovibrio vulgaris (strain ATCC 29579 / DSM 644 / CCUG 34227 / NCIMB 8303 / VKM B-1760 / Hildenborough) (Desulfovibrio vulgaris).